The chain runs to 84 residues: Large ribosomal subunit protein bL27 (84 aa).

It belongs to the bacterial ribosomal protein bL27 family.

In Salinispora tropica (strain ATCC BAA-916 / DSM 44818 / JCM 13857 / NBRC 105044 / CNB-440), this protein is Large ribosomal subunit protein bL27.